The primary structure comprises 929 residues: Isoleucine--tRNA ligase (929 aa).

Residues 58 to 68 carry the 'HIGH' region motif; the sequence is PYANGDIHIGH. E563 contributes to the L-isoleucyl-5'-AMP binding site. The 'KMSKS' region signature appears at 605-609; it reads KMSKS. K608 contacts ATP. C892, C895, C912, and C915 together coordinate Zn(2+).

This sequence belongs to the class-I aminoacyl-tRNA synthetase family. IleS type 1 subfamily. As to quaternary structure, monomer. Requires Zn(2+) as cofactor.

It localises to the cytoplasm. The catalysed reaction is tRNA(Ile) + L-isoleucine + ATP = L-isoleucyl-tRNA(Ile) + AMP + diphosphate. Functionally, catalyzes the attachment of isoleucine to tRNA(Ile). As IleRS can inadvertently accommodate and process structurally similar amino acids such as valine, to avoid such errors it has two additional distinct tRNA(Ile)-dependent editing activities. One activity is designated as 'pretransfer' editing and involves the hydrolysis of activated Val-AMP. The other activity is designated 'posttransfer' editing and involves deacylation of mischarged Val-tRNA(Ile). The polypeptide is Isoleucine--tRNA ligase (Neisseria gonorrhoeae (strain ATCC 700825 / FA 1090)).